The chain runs to 372 residues: tRNA-specific 2-thiouridylase MnmA (372 aa).

Residues 16–23 (GMSGGVDS) and Met42 each bind ATP. The interaction with target base in tRNA stretch occupies residues 102–104 (NPD). Cys107 (nucleophile) is an active-site residue. A disulfide bridge connects residues Cys107 and Cys205. Position 132 (Gly132) interacts with ATP. Positions 155–157 (KDQ) are interaction with tRNA. The active-site Cysteine persulfide intermediate is Cys205. Positions 317-318 (RY) are interaction with tRNA.

It belongs to the MnmA/TRMU family.

It localises to the cytoplasm. The enzyme catalyses S-sulfanyl-L-cysteinyl-[protein] + uridine(34) in tRNA + AH2 + ATP = 2-thiouridine(34) in tRNA + L-cysteinyl-[protein] + A + AMP + diphosphate + H(+). Catalyzes the 2-thiolation of uridine at the wobble position (U34) of tRNA, leading to the formation of s(2)U34. The polypeptide is tRNA-specific 2-thiouridylase MnmA (Shewanella putrefaciens (strain CN-32 / ATCC BAA-453)).